The chain runs to 440 residues: Chromosomal replication initiator protein DnaA (440 aa).

Positions 1–93 (MNVQLNEIWN…QTPVKPVAQE (93 aa)) are domain I, interacts with DnaA modulators. The interval 94 to 101 (YTEDSNMS) is domain II. The tract at residues 102 to 318 (FLNPKYTFDT…GALNRVIAYS (217 aa)) is domain III, AAA+ region. ATP is bound by residues Gly146, Gly148, Lys149, and Thr150. Residues 319–440 (TLTENIINVD…EEIKKNITGG (122 aa)) are domain IV, binds dsDNA.

It belongs to the DnaA family. Oligomerizes as a right-handed, spiral filament on DNA at oriC.

It is found in the cytoplasm. Its function is as follows. Plays an essential role in the initiation and regulation of chromosomal replication. ATP-DnaA binds to the origin of replication (oriC) to initiate formation of the DNA replication initiation complex once per cell cycle. Binds the DnaA box (a 9 base pair repeat at the origin) and separates the double-stranded (ds)DNA. Forms a right-handed helical filament on oriC DNA; dsDNA binds to the exterior of the filament while single-stranded (ss)DNA is stabiized in the filament's interior. The ATP-DnaA-oriC complex binds and stabilizes one strand of the AT-rich DNA unwinding element (DUE), permitting loading of DNA polymerase. After initiation quickly degrades to an ADP-DnaA complex that is not apt for DNA replication. Binds acidic phospholipids. This is Chromosomal replication initiator protein DnaA from Ruminiclostridium cellulolyticum (strain ATCC 35319 / DSM 5812 / JCM 6584 / H10) (Clostridium cellulolyticum).